The sequence spans 401 residues: Glutamyl-tRNA reductase (401 aa).

Residues 49–52, Ser92, 97–99, and Gln103 contribute to the substrate site; these read TCNR and END. The active-site Nucleophile is Cys50. An NADP(+)-binding site is contributed by 171-176; sequence GNGKMA.

This sequence belongs to the glutamyl-tRNA reductase family. In terms of assembly, homodimer.

It carries out the reaction (S)-4-amino-5-oxopentanoate + tRNA(Glu) + NADP(+) = L-glutamyl-tRNA(Glu) + NADPH + H(+). It functions in the pathway porphyrin-containing compound metabolism; protoporphyrin-IX biosynthesis; 5-aminolevulinate from L-glutamyl-tRNA(Glu): step 1/2. Functionally, catalyzes the NADPH-dependent reduction of glutamyl-tRNA(Glu) to glutamate 1-semialdehyde (GSA). This is Glutamyl-tRNA reductase from Picrophilus torridus (strain ATCC 700027 / DSM 9790 / JCM 10055 / NBRC 100828 / KAW 2/3).